The primary structure comprises 243 residues: uncharacterized protein (243 aa).

Residues 26 to 204 (RVGLVLDITG…ISDDELYDAL (179 aa)) enclose the VWFA domain. The segment at 222–243 (REQEPPAEKPKKKGFFSRLFSK) is disordered. The segment covering 231 to 243 (PKKKGFFSRLFSK) has biased composition (basic residues).

This is an uncharacterized protein from Bacillus subtilis (strain 168).